Reading from the N-terminus, the 224-residue chain is ATP synthase subunit a (224 aa).

Helical transmembrane passes span 17–37 (LSLN…IYWL), 72–92 (IFIS…FPYI), 99–119 (LTLT…YGWI), 125–145 (MFAH…MVCI), 170–190 (LLLT…VTFL), and 195–215 (IALL…FAVL).

This sequence belongs to the ATPase A chain family. F-type ATPases have 2 components, CF(1) - the catalytic core - and CF(0) - the membrane proton channel. CF(1) has five subunits: alpha(3), beta(3), gamma(1), delta(1), epsilon(1). CF(0) has three main subunits: a, b and c.

The protein resides in the mitochondrion inner membrane. In terms of biological role, mitochondrial membrane ATP synthase (F(1)F(0) ATP synthase or Complex V) produces ATP from ADP in the presence of a proton gradient across the membrane which is generated by electron transport complexes of the respiratory chain. F-type ATPases consist of two structural domains, F(1) - containing the extramembraneous catalytic core and F(0) - containing the membrane proton channel, linked together by a central stalk and a peripheral stalk. During catalysis, ATP synthesis in the catalytic domain of F(1) is coupled via a rotary mechanism of the central stalk subunits to proton translocation. Key component of the proton channel; it may play a direct role in the translocation of protons across the membrane. In Drosophila simulans (Fruit fly), this protein is ATP synthase subunit a (mt:ATPase6).